Here is a 926-residue protein sequence, read N- to C-terminus: Beta-mannosidase A (926 aa).

An N-terminal signal peptide occupies residues 1-21 (MHVKAETVLALLTPAPPSVVG). Residues Asn40, Asn242, Asn277, Asn311, and Asn342 are each glycosylated (N-linked (GlcNAc...) asparagine). Glu474 (proton donor) is an active-site residue. 10 N-linked (GlcNAc...) asparagine glycosylation sites follow: Asn532, Asn603, Asn626, Asn653, Asn733, Asn756, Asn785, Asn793, Asn819, and Asn905.

It belongs to the glycosyl hydrolase 2 family. Beta-mannosidase A subfamily. As to quaternary structure, homodimer.

It is found in the secreted. It catalyses the reaction Hydrolysis of terminal, non-reducing beta-D-mannose residues in beta-D-mannosides.. The protein operates within glycan metabolism; N-glycan degradation. Functionally, exoglycosidase that cleaves the single beta-linked mannose residue from the non-reducing end of beta-mannosidic oligosaccharides of various complexity and length. Involved in the degradation of polymeric mannan and galactomannan. In Aspergillus fumigatus (strain CBS 144.89 / FGSC A1163 / CEA10) (Neosartorya fumigata), this protein is Beta-mannosidase A (mndA).